Here is a 401-residue protein sequence, read N- to C-terminus: Keratin-associated protein 10-4 (401 aa).

Tandem repeats lie at residues C36–P40, C41–S45, C46–A50, C67–T71, C89–S93, C99–S103, C109–V113, C114–V118, C119–V123, C124–V128, C129–S133, C135–S139, C145–S149, C155–I159, C160–V164, C172–S176, C186–V190, C208–S212, C218–S222, C228–V232, C233–V237, C238–V242, C250–S254, C270–V274, C275–V279, C280–V284, C297–S301, C307–S311, C317–V321, C322–V326, C339–S343, C349–S353, C354–S358, C373–V377, and C391–A395. The interval C36–A395 is 36 X 5 AA repeats of C-C-X(3).

The protein belongs to the KRTAP type 10 family. Interacts with hair keratins. As to expression, restricted to hair root, not detected in any other tissues.

Functionally, in the hair cortex, hair keratin intermediate filaments are embedded in an interfilamentous matrix, consisting of hair keratin-associated proteins (KRTAP), which are essential for the formation of a rigid and resistant hair shaft through their extensive disulfide bond cross-linking with abundant cysteine residues of hair keratins. The matrix proteins include the high-sulfur and high-glycine-tyrosine keratins. In Homo sapiens (Human), this protein is Keratin-associated protein 10-4 (KRTAP10-4).